The following is a 369-amino-acid chain: Phenylalanine--tRNA ligase alpha subunit (369 aa).

Mg(2+) is bound at residue Glu-269.

It belongs to the class-II aminoacyl-tRNA synthetase family. Phe-tRNA synthetase alpha subunit type 1 subfamily. Tetramer of two alpha and two beta subunits. Mg(2+) is required as a cofactor.

The protein localises to the cytoplasm. The enzyme catalyses tRNA(Phe) + L-phenylalanine + ATP = L-phenylalanyl-tRNA(Phe) + AMP + diphosphate + H(+). The chain is Phenylalanine--tRNA ligase alpha subunit from Brucella anthropi (strain ATCC 49188 / DSM 6882 / CCUG 24695 / JCM 21032 / LMG 3331 / NBRC 15819 / NCTC 12168 / Alc 37) (Ochrobactrum anthropi).